A 371-amino-acid polypeptide reads, in one-letter code: Alanine dehydrogenase (371 aa).

Substrate is bound by residues Arg-15 and Lys-74. The active-site Proton donor/acceptor is His-95. NAD(+)-binding positions include Ser-133, 177–178 (QA), Asp-197, Ser-219, 238–239 (VL), 266–269 (IAID), and 298–301 (VANM). Catalysis depends on Asp-269, which acts as the Proton donor/acceptor.

It belongs to the AlaDH/PNT family. Homohexamer. Trimer of dimer.

It catalyses the reaction L-alanine + NAD(+) + H2O = pyruvate + NH4(+) + NADH + H(+). The protein operates within amino-acid degradation; L-alanine degradation via dehydrogenase pathway; NH(3) and pyruvate from L-alanine: step 1/1. Functionally, catalyzes the reversible reductive amination of pyruvate to L-alanine. May play a role in cell wall synthesis as L-alanine is an important constituent of the peptidoglycan layer. This chain is Alanine dehydrogenase (ald), found in Staphylococcus epidermidis (strain ATCC 35984 / DSM 28319 / BCRC 17069 / CCUG 31568 / BM 3577 / RP62A).